A 302-amino-acid chain; its full sequence is uncharacterized protein (302 aa).

It belongs to the HAD-like hydrolase superfamily.

This is an uncharacterized protein from Saccharomyces cerevisiae (strain ATCC 204508 / S288c) (Baker's yeast).